The primary structure comprises 200 residues: LexA repressor (200 aa).

The H-T-H motif DNA-binding region spans 27–47 (VREICNAVELRSTSTVHGHLK). Catalysis depends on for autocatalytic cleavage activity residues Ser124 and Lys161.

It belongs to the peptidase S24 family. As to quaternary structure, homodimer.

The catalysed reaction is Hydrolysis of Ala-|-Gly bond in repressor LexA.. In terms of biological role, represses a number of genes involved in the response to DNA damage (SOS response), including recA and lexA. In the presence of single-stranded DNA, RecA interacts with LexA causing an autocatalytic cleavage which disrupts the DNA-binding part of LexA, leading to derepression of the SOS regulon and eventually DNA repair. This is LexA repressor from Clostridium tetani (strain Massachusetts / E88).